The chain runs to 981 residues: Calsyntenin-1 (981 aa).

The signal sequence occupies residues 1 to 28 (MLRRPAPALAPAARLLLAGLLCGGGVWA). Residues 29–859 (ARVNKHKPWL…PHPFAVVPST (831 aa)) are Extracellular-facing. 2 consecutive Cadherin domains span residues 38-164 (LEPT…APVF) and 165-265 (KEKS…TPGW). N-linked (GlcNAc...) asparagine glycosylation is found at N346, N366, and N515. The chain crosses the membrane as a helical span at residues 860 to 880 (ATVVIVVCVSFLVFMIILGVF). Residues 881–981 (RIRAAHRRTM…LEWDDSTLSY (101 aa)) lie on the Cytoplasmic side of the membrane. Residues 915 to 981 (METYEDQHSS…LEWDDSTLSY (67 aa)) are disordered. The segment covering 925–960 (EEEEEEEEEEESEDGEEEDDITSAESESSEEEEGEQ) has biased composition (acidic residues). Residues 962 to 981 (DPQNATRQQQLEWDDSTLSY) are compositionally biased toward polar residues.

The protein belongs to the calsyntenin family. As to quaternary structure, directly interacts with APBA2. Forms a tripartite complex with APBA2 and APP. Interacts with KLC1. In terms of assembly, interacts with APBB1; this interaction stabilizes AlcICD metabolism. Interacts with PSEN1. Proteolytically processed under normal cellular conditions. A primary zeta-cleavage generates a large extracellular (soluble) N-terminal domain (sAlc) and a short C-terminal transmembrane fragment (CTF1). A secondary cleavage catalyzed by presenilin gamma-secretase within the transmembrane domain releases the beta-Alc-alpha chain in the extracellular milieu and produces an intracellular fragment (AlcICD). This processing is strongly suppressed in the tripartite complex formed with APBA2 and APP, which seems to prevent the association with PSEN1. Expressed in the brain and, a lower level, in the heart, skeletal muscle, kidney and placenta. Accumulates in dystrophic neurites around the amyloid core of Alzheimer disease senile plaques (at protein level).

The protein localises to the postsynaptic cell membrane. It localises to the endoplasmic reticulum membrane. The protein resides in the golgi apparatus membrane. It is found in the cell projection. Its subcellular location is the neuron projection. The protein localises to the nucleus. In terms of biological role, postsynaptic adhesion molecule that binds to presynaptic neurexins to mediate both excitatory and inhibitory synapse formation. Promotes synapse development by acting as a cell adhesion molecule at the postsynaptic membrane, which associates with neurexin-alpha at the presynaptic membrane. Also functions as a cargo in axonal anterograde transport by acting as a molecular adapter that promotes KLC1 association with vesicles. Complex formation with APBA2 and APP, stabilizes APP metabolism and enhances APBA2-mediated suppression of beta-APP40 secretion, due to the retardation of intracellular APP maturation. Functionally, as intracellular fragment AlcICD, suppresses APBB1-dependent transactivation stimulated by APP C-terminal intracellular fragment (AICD), most probably by competing with AICD for APBB1-binding. In complex with APBA2 and C99, a C-terminal APP fragment, abolishes C99 interaction with PSEN1 and thus APP C99 cleavage by gamma-secretase, most probably through stabilization of the direct interaction between APBA2 and APP. The chain is Calsyntenin-1 from Homo sapiens (Human).